A 142-amino-acid polypeptide reads, in one-letter code: MVLSPADKTNIKSTWDKIGGHAGDYGGEALDRTFQSFPTTKTYFPHFDLSPGSAQVKAHGKKVADALTTAVAHLDDLPGALSALSDLHAYKLRVDPVNFKLLSHCLLVTLACHHPTEFTPAVHASLDKFFTAVSTVLTSKYR.

Positions 2-142 constitute a Globin domain; sequence VLSPADKTNI…VSTVLTSKYR (141 aa). A Phosphoserine modification is found at Ser-4. N6-succinyllysine is present on Lys-8. Phosphothreonine is present on Thr-9. An N6-succinyllysine modification is found at Lys-12. Residue Lys-17 is modified to N6-acetyllysine; alternate. Lys-17 is modified (N6-succinyllysine; alternate). Position 25 is a phosphotyrosine (Tyr-25). Position 36 is a phosphoserine (Ser-36). Lys-41 carries the N6-succinyllysine modification. Ser-50 carries the phosphoserine modification. O2 is bound at residue His-59. A heme b-binding site is contributed by His-88. The residue at position 103 (Ser-103) is a Phosphoserine. Phosphothreonine is present on Thr-109. Ser-125 bears the Phosphoserine mark. Phosphothreonine occurs at positions 135 and 138. Ser-139 carries the phosphoserine modification.

This sequence belongs to the globin family. In terms of assembly, heterotetramer of two alpha chains and two beta chains. Red blood cells.

Involved in oxygen transport from the lung to the various peripheral tissues. Its function is as follows. Hemopressin acts as an antagonist peptide of the cannabinoid receptor CNR1. Hemopressin-binding efficiently blocks cannabinoid receptor CNR1 and subsequent signaling. This Canis latrans (Coyote) protein is Hemoglobin subunit alpha (HBA).